Here is a 427-residue protein sequence, read N- to C-terminus: Terminal nucleotidyltransferase 5B (427 aa).

The disordered stretch occupies residues 1 to 49 (MMPSESGAESLEQPAAQVGTGAASAVATAGAAGGGPDPEASSASLGRHQ). Positions 15 to 30 (AAQVGTGAASAVATAG) are enriched in low complexity.

This sequence belongs to the TENT family.

It is found in the cytoplasm. The protein resides in the nucleus. It catalyses the reaction RNA(n) + ATP = RNA(n)-3'-adenine ribonucleotide + diphosphate. Its function is as follows. Catalyzes the transfer of one adenosine molecule from an ATP to an mRNA poly(A) tail bearing a 3'-OH terminal group in an ATP hydrolysis-dependent manner. May be involved in maintaining the translation efficiency of at least some genes through preventing degradation of their mRNAs. Prefers RNA molecules that are adenosine-rich close to 3'-end. In addition, may inhibit cell proliferation and cell cycle progression through ubiquitination of beta-catenin/CTNNB1. In Mus musculus (Mouse), this protein is Terminal nucleotidyltransferase 5B.